Reading from the N-terminus, the 293-residue chain is Cytidine deaminase (293 aa).

CMP/dCMP-type deaminase domains follow at residues 47-166 and 186-293; these read DDRA…FGPA and VSDD…YQAV. A substrate-binding site is contributed by 88-90; that stretch reads NME. Zn(2+) is bound at residue His-101. Glu-103 serves as the catalytic Proton donor. Zn(2+) contacts are provided by Cys-128 and Cys-131.

This sequence belongs to the cytidine and deoxycytidylate deaminase family. Homodimer. It depends on Zn(2+) as a cofactor.

It carries out the reaction cytidine + H2O + H(+) = uridine + NH4(+). It catalyses the reaction 2'-deoxycytidine + H2O + H(+) = 2'-deoxyuridine + NH4(+). This enzyme scavenges exogenous and endogenous cytidine and 2'-deoxycytidine for UMP synthesis. The chain is Cytidine deaminase from Aeromonas hydrophila subsp. hydrophila (strain ATCC 7966 / DSM 30187 / BCRC 13018 / CCUG 14551 / JCM 1027 / KCTC 2358 / NCIMB 9240 / NCTC 8049).